The chain runs to 100 residues: NADH-quinone oxidoreductase subunit K (100 aa).

Transmembrane regions (helical) follow at residues 4–24 (ITYYLLLAAALFCMGMFGVLV), 29–49 (LVVFMSVELMLNAANLTFVAF), and 63–83 (FFVIAVAAAEAAIGLAIVIAV).

It belongs to the complex I subunit 4L family. NDH-1 is composed of 14 different subunits. Subunits NuoA, H, J, K, L, M, N constitute the membrane sector of the complex.

It is found in the cell inner membrane. The enzyme catalyses a quinone + NADH + 5 H(+)(in) = a quinol + NAD(+) + 4 H(+)(out). In terms of biological role, NDH-1 shuttles electrons from NADH, via FMN and iron-sulfur (Fe-S) centers, to quinones in the respiratory chain. The immediate electron acceptor for the enzyme in this species is believed to be ubiquinone. Couples the redox reaction to proton translocation (for every two electrons transferred, four hydrogen ions are translocated across the cytoplasmic membrane), and thus conserves the redox energy in a proton gradient. The chain is NADH-quinone oxidoreductase subunit K from Myxococcus xanthus (strain DK1622).